Here is a 232-residue protein sequence, read N- to C-terminus: MPRAAPPALLLPLLGLAAAAAADCPSSTWVQFQDSCYIFLQEAIKVESIEDVRNQCTNHGADMISIHNEEENAFILDTLKKQWKDPADILLGMFFDTDDASFKWFDNSNMTFNKWSDQEDDEELVDTCAFLHTKTGDWKKGNCEVSSVEGTLCKAAIPYEKKYLSDNRILISALVIASTVILTVLGAVVWFLYKRSLDSGFTTVFSAAHQSPYNDDCVLVVAEENEYDIQFN.

An N-terminal signal peptide occupies residues 1–22; sequence MPRAAPPALLLPLLGLAAAAAA. At 23-168 the chain is on the extracellular side; the sequence is DCPSSTWVQF…YEKKYLSDNR (146 aa). A C-type lectin domain is found at 32 to 152; that stretch reads FQDSCYIFLQ…CEVSSVEGTL (121 aa). Asn109 is a glycosylation site (N-linked (GlcNAc...) asparagine). An intrachain disulfide couples Cys128 to Cys143. The chain crosses the membrane as a helical span at residues 169-189; sequence ILISALVIASTVILTVLGAVV. Residues 190 to 232 lie on the Cytoplasmic side of the membrane; that stretch reads WFLYKRSLDSGFTTVFSAAHQSPYNDDCVLVVAEENEYDIQFN.

It localises to the membrane. It is found in the cell projection. The protein resides in the filopodium. The protein localises to the cytoplasm. Its subcellular location is the cell cortex. It localises to the microvillus. Potential multifunctional C-type lectin receptor that may play roles in endocytosis and phagocytosis as well as in cell adhesion and migration. The sequence is that of CD302 antigen from Bos taurus (Bovine).